Reading from the N-terminus, the 253-residue chain is Aspartate/glutamate leucyltransferase (253 aa).

It belongs to the R-transferase family. Bpt subfamily.

Its subcellular location is the cytoplasm. It carries out the reaction N-terminal L-glutamyl-[protein] + L-leucyl-tRNA(Leu) = N-terminal L-leucyl-L-glutamyl-[protein] + tRNA(Leu) + H(+). The catalysed reaction is N-terminal L-aspartyl-[protein] + L-leucyl-tRNA(Leu) = N-terminal L-leucyl-L-aspartyl-[protein] + tRNA(Leu) + H(+). Functionally, functions in the N-end rule pathway of protein degradation where it conjugates Leu from its aminoacyl-tRNA to the N-termini of proteins containing an N-terminal aspartate or glutamate. The chain is Aspartate/glutamate leucyltransferase from Allorhizobium ampelinum (strain ATCC BAA-846 / DSM 112012 / S4) (Agrobacterium vitis (strain S4)).